A 167-amino-acid chain; its full sequence is uncharacterized protein (167 aa).

One can recognise an N-acetyltransferase domain in the interval 1–148 (MLIRVEIPID…SAFQVHRLAD (148 aa)).

It belongs to the acetyltransferase family.

This is an uncharacterized protein from Escherichia coli O157:H7.